The following is a 496-amino-acid chain: Versicolorin B desaturase stcL (496 aa).

The chain crosses the membrane as a helical span at residues 3-23; it reads FLSLPILTALGAVVYVLFQLV. C440 is a binding site for heme.

This sequence belongs to the cytochrome P450 family. Heme serves as cofactor.

The protein localises to the membrane. It carries out the reaction versicolorin B + NADPH + O2 + H(+) = versicolorin A + NADP(+) + 2 H2O. It participates in mycotoxin biosynthesis; sterigmatocystin biosynthesis. Cytochrome P450 monooxygenase; part of the gene cluster that mediates the biosynthesis of sterigmatocystin (ST), a polyketide-derived furanocoumarin which is part of the most toxic and carcinogenic compounds among the known mycotoxins. The first step in the biosynthesis of sterigmatocystin is the production of hexanoate by the fatty acid synthase (FAS) units stcJ and stcK. The polyketide backbone is assembled by the non-reducing polyketide synthase stcA by condensation of the starter hexanoyl-CoA and 7 malonyl-CoA extender units followed by cyclization and release of norsolorinic acid. Norsolorinic acid is the first stable intermediate in the biosynthesis of sterigmatocystin and is converted into averantin (AVN) by the ketoreductase stcE which reduces the hexanoate ketone to an alcohol. Averantin is then oxidized into 5'-hydroxyaverantin (HAVN) by the cytochrome P450 monooxygenase stcF. 5'-hydroxyaverantin is further converted to 5'-oxyaverantin (OAVN) by the 5'-hydroxyaverantin dehydrogenase stcG. The next step is the conversion of OAVN into averufin (AVF) which is catalyzed by a yet to be identified enzyme. The cytochrome P450 monooxygenase stcB and the flavin-binding monooxygenase stcW are both required for the conversion of averufin to 1-hydroxyversicolorone. The esterase stcI probably catalyzes the formation of versiconal hemiacetal acetate from 1-hydroxyversicolorone. The oxydoreductase stcN then probably catalyzes the biosynthetic step from versiconal to versicolorin B (VERB). The next step is performed by the versicolorin B desaturase stcL to produce versicolorin A (VERA). The ketoreductase stcU and the cytochrome P450 monooxygenase stcS are involved in the conversion of versicolorin A to demethylsterigmatocystin. The Baeyer-Villiger oxidas stcQ and the reductase stcR might be involved in the biosynthetic step from versicolorin A to demethylsterigmatocystin. The final step in the biosynthesis of sterigmatocystin is the methylation of demethylsterigmatocystin catalyzed by the methyltransferase stcP. The sequence is that of Versicolorin B desaturase stcL from Emericella nidulans (strain FGSC A4 / ATCC 38163 / CBS 112.46 / NRRL 194 / M139) (Aspergillus nidulans).